We begin with the raw amino-acid sequence, 462 residues long: Argininosuccinate lyase (462 aa).

The protein belongs to the lyase 1 family. Argininosuccinate lyase subfamily.

It localises to the cytoplasm. It catalyses the reaction 2-(N(omega)-L-arginino)succinate = fumarate + L-arginine. Its pathway is amino-acid biosynthesis; L-arginine biosynthesis; L-arginine from L-ornithine and carbamoyl phosphate: step 3/3. This is Argininosuccinate lyase from Caldicellulosiruptor bescii (strain ATCC BAA-1888 / DSM 6725 / KCTC 15123 / Z-1320) (Anaerocellum thermophilum).